Consider the following 192-residue polypeptide: Ciliary microtubule-associated protein 3 (192 aa).

Interacts with proteins involved in ciliary transport, including ARL13B, CETN1, KIF3A, RAB6A, RAB8A, TUBB1 and TUBG1. Interacts with AURKA.

The protein localises to the cytoplasmic vesicle. It localises to the golgi apparatus. Its subcellular location is the trans-Golgi network. The protein resides in the cytoplasm. In terms of biological role, during primary cilia disassembly, involved in cilia disassembly. Required specifically to control cilia retraction as well as the liberation and duplication of the basal body/centrosome. May act by stimulating AURKA activity at the basal body in a cell cycle-dependent manner. The protein is Ciliary microtubule-associated protein 3 (CIMAP3) of Bos taurus (Bovine).